A 340-amino-acid chain; its full sequence is Methionine import ATP-binding protein MetN 2 (340 aa).

An ABC transporter domain is found at 2–241 (ITLQNVVKEY…PKEKVTQRFV (240 aa)). 38–45 (GYSGAGKS) lines the ATP pocket.

This sequence belongs to the ABC transporter superfamily. Methionine importer (TC 3.A.1.24) family. As to quaternary structure, the complex is composed of two ATP-binding proteins (MetN), two transmembrane proteins (MetI) and a solute-binding protein (MetQ).

Its subcellular location is the cell membrane. The enzyme catalyses L-methionine(out) + ATP + H2O = L-methionine(in) + ADP + phosphate + H(+). It catalyses the reaction D-methionine(out) + ATP + H2O = D-methionine(in) + ADP + phosphate + H(+). Functionally, part of the ABC transporter complex MetNIQ involved in methionine import. Responsible for energy coupling to the transport system. The sequence is that of Methionine import ATP-binding protein MetN 2 from Listeria innocua serovar 6a (strain ATCC BAA-680 / CLIP 11262).